We begin with the raw amino-acid sequence, 143 residues long: MAKKIEAYIKLQVAAGQANPSPPVGPALGQRGVNIMEFCKAFNAKTQGMEPGLPIPTVITVYSDRSFTFITKTPPAPVLLKKAAGIKSGSGRPNTDKVGTVTRAQLEEIAKTKEPDLTAADMEAAVRTIAGTARSMGLNVEGL.

The protein belongs to the universal ribosomal protein uL11 family. As to quaternary structure, part of the ribosomal stalk of the 50S ribosomal subunit. Interacts with L10 and the large rRNA to form the base of the stalk. L10 forms an elongated spine to which L12 dimers bind in a sequential fashion forming a multimeric L10(L12)X complex. Post-translationally, one or more lysine residues are methylated.

Forms part of the ribosomal stalk which helps the ribosome interact with GTP-bound translation factors. The chain is Large ribosomal subunit protein uL11 from Marinobacter nauticus (strain ATCC 700491 / DSM 11845 / VT8) (Marinobacter aquaeolei).